We begin with the raw amino-acid sequence, 558 residues long: Glucose-6-phosphate isomerase (558 aa).

Ala2 carries the N-acetylalanine modification. N6-acetyllysine is present on Lys12. An N6-(2-hydroxyisobutyryl)lysine modification is found at Lys34. Ser107 is modified (phosphoserine). A Phosphothreonine modification is found at Thr109. Lys142 carries the N6-acetyllysine modification. 159 to 160 provides a ligand contact to D-glucose 6-phosphate; it reads GS. Position 185 is a phosphoserine; by CK2 (Ser185). D-glucose 6-phosphate is bound at residue 210–215; the sequence is SKTFTT. Thr250 bears the Phosphothreonine mark. D-glucose 6-phosphate is bound by residues Gln354, Glu358, and His389. Glu358 (proton donor) is an active-site residue. The active site involves His389. Lys454 is modified (N6-acetyllysine; alternate). The residue at position 454 (Lys454) is an N6-malonyllysine; alternate. Lys454 is modified (N6-succinyllysine; alternate). Ser455 carries the post-translational modification Phosphoserine. Residue Lys519 coordinates D-glucose 6-phosphate. Lys519 is an active-site residue.

It belongs to the GPI family. As to quaternary structure, homodimer; in the catalytically active form. Monomer in the secreted form. Post-translationally, phosphorylation at Ser-185 by CK2 has been shown to decrease enzymatic activity and may contribute to secretion by a non-classical secretory pathway. ISGylated.

The protein localises to the cytoplasm. Its subcellular location is the secreted. The catalysed reaction is alpha-D-glucose 6-phosphate = beta-D-fructose 6-phosphate. It functions in the pathway carbohydrate degradation; glycolysis; D-glyceraldehyde 3-phosphate and glycerone phosphate from D-glucose: step 2/4. In the cytoplasm, catalyzes the conversion of glucose-6-phosphate to fructose-6-phosphate, the second step in glycolysis, and the reverse reaction during gluconeogenesis. Besides it's role as a glycolytic enzyme, also acts as a secreted cytokine: acts as an angiogenic factor (AMF) that stimulates endothelial cell motility. Acts as a neurotrophic factor, neuroleukin, for spinal and sensory neurons. It is secreted by lectin-stimulated T-cells and induces immunoglobulin secretion. The protein is Glucose-6-phosphate isomerase of Macaca fascicularis (Crab-eating macaque).